The following is an 89-amino-acid chain: MSLTKEKKAEIINTFGGSDKNTGKTEVQIALYSRRISDLTGHLKEHPKDKHSRHGLLKLVGKRKSLLAYLKNTEIERYRQVLADLDLRK.

Belongs to the universal ribosomal protein uS15 family. In terms of assembly, part of the 30S ribosomal subunit. Forms a bridge to the 50S subunit in the 70S ribosome, contacting the 23S rRNA.

Its function is as follows. One of the primary rRNA binding proteins, it binds directly to 16S rRNA where it helps nucleate assembly of the platform of the 30S subunit by binding and bridging several RNA helices of the 16S rRNA. Forms an intersubunit bridge (bridge B4) with the 23S rRNA of the 50S subunit in the ribosome. This is Small ribosomal subunit protein uS15 from Prosthecochloris aestuarii (strain DSM 271 / SK 413).